The following is a 350-amino-acid chain: MVNVSITTDYSRMLFMRNTTSTLKIAIIGYGSQGRAHALNLRDSGFDIIIGLRPGGPTEAKAQADGFTVQSPDQAAKHADLVAVLTPDMVQKKLYEEVLAPNIKQGACLLFAHGLNVHYGMITPRSDLDVVLVAPKGPGALVRREYEIGRGVPCIYAVHQDLSSHAEQLALTYAGGLGGARANIIKTTFKEETETDLFGEQAVLCGGVSSLVQAGFETLVEAGYQPEIAYYEVLHELKLIVDLFYEGGITRMLEFVSETAQYGDYVSGPRVIDGSTKERMKAVLKDIQDGTFTKHWIAEYQAGLPNYKKYKQADLEHPIEKVGKQLRAKMVWLNSEKTNDTTPPMSSKVV.

Residues 4–187 (VSITTDYSRM…GGARANIIKT (184 aa)) enclose the KARI N-terminal Rossmann domain. NADP(+)-binding positions include 30-33 (YGSQ), Arg53, Thr58, and 88-91 (DMVQ). His113 is a catalytic residue. Gly139 contributes to the NADP(+) binding site. The KARI C-terminal knotted domain maps to 188–333 (TFKEETETDL…KQLRAKMVWL (146 aa)). 4 residues coordinate Mg(2+): Asp196, Glu200, Glu232, and Glu236. A substrate-binding site is contributed by Ser257.

This sequence belongs to the ketol-acid reductoisomerase family. Requires Mg(2+) as cofactor.

It catalyses the reaction (2R)-2,3-dihydroxy-3-methylbutanoate + NADP(+) = (2S)-2-acetolactate + NADPH + H(+). The enzyme catalyses (2R,3R)-2,3-dihydroxy-3-methylpentanoate + NADP(+) = (S)-2-ethyl-2-hydroxy-3-oxobutanoate + NADPH + H(+). Its pathway is amino-acid biosynthesis; L-isoleucine biosynthesis; L-isoleucine from 2-oxobutanoate: step 2/4. The protein operates within amino-acid biosynthesis; L-valine biosynthesis; L-valine from pyruvate: step 2/4. In terms of biological role, involved in the biosynthesis of branched-chain amino acids (BCAA). Catalyzes an alkyl-migration followed by a ketol-acid reduction of (S)-2-acetolactate (S2AL) to yield (R)-2,3-dihydroxy-isovalerate. In the isomerase reaction, S2AL is rearranged via a Mg-dependent methyl migration to produce 3-hydroxy-3-methyl-2-ketobutyrate (HMKB). In the reductase reaction, this 2-ketoacid undergoes a metal-dependent reduction by NADPH to yield (R)-2,3-dihydroxy-isovalerate. In Xylella fastidiosa (strain 9a5c), this protein is Ketol-acid reductoisomerase (NADP(+)).